The following is a 104-amino-acid chain: MTENKNFEFIENEIKNNKVVLFMKGTKEATMCGFSAKVVAILNKLGVEFRDINVFVNPEFREDLKKFSDWPTFPQLYIKGELVGGCDIATELYNNGELEKMLKG.

In terms of domain architecture, Glutaredoxin spans 7–104 (FEFIENEIKN…NGELEKMLKG (98 aa)). Residue Lys24 coordinates glutathione. Cys32 is a [2Fe-2S] cluster binding site. Residues Arg61, Phe73, and 86 to 87 (CD) contribute to the glutathione site.

This sequence belongs to the glutaredoxin family. Monothiol subfamily.

The chain is Probable monothiol glutaredoxin 2 (grxC2) from Rickettsia felis (strain ATCC VR-1525 / URRWXCal2) (Rickettsia azadi).